A 2073-amino-acid chain; its full sequence is Histone acetyltransferase KAT6B (2073 aa).

Residues 1–77 form the SAMD1-like winged helix (WH) domain; sequence MVKLANPLYT…LASYKDPDNP (77 aa). A disordered region spans residues 72 to 97; that stretch reads KDPDNPGRFSSVKPGTFPKSAKGSRG. The region spanning 103–176 is the H15 domain; it reads RNVDWNKLLR…KDGPQYRVNY (74 aa). 2 consecutive PHD-type zinc fingers follow at residues 213–272 and 269–320; these read IPIC…CKTC and CKTC…CRPK. Phosphoserine is present on Ser-355. Disordered regions lie at residues 360–409, 442–531, 553–583, and 639–663; these read EGSM…RPGA, FTPS…VPSL, TQGQSRKKGHPSYAPPKRMRRKTELSSTAKS, and VTPQMGTPSPGKGSLTDGRIKPDQD. The tract at residues 361–717 is negatively regulates HAT activity; the sequence is GSMNAFTGRG…ECESGVEDCG (357 aa). Positions 379–399 are enriched in polar residues; sequence KVCTTPSSGHAASGKDSSSRL. Residues 447-460 show a composition bias toward basic and acidic residues; it reads DGRRSRGEIIDFSK. The span at 470-485 shows a compositional bias: polar residues; that stretch reads QKQSCTSHVLATGTTQ. The span at 488–499 shows a compositional bias: pro residues; that stretch reads KPPPSSLPPPTP. Residues 501-531 are compositionally biased toward low complexity; sequence SGQSPSSQKSSTATSSPSPQSSSSQCSVPSL. Residue Ser-647 is modified to Phosphoserine. A Glycyl lysine isopeptide (Lys-Gly) (interchain with G-Cter in SUMO2) cross-link involves residue Lys-673. The MYST-type HAT domain occupies 715 to 989; that stretch reads DCGRYPSVIE…LDPDSLRWTP (275 aa). A catalytic region spans residues 718 to 1008; that stretch reads RYPSVIEFGK…EEEREAEKEA (291 aa). Residues 748–773 form a C2HC MYST-type zinc finger; the sequence is LYLCEFCLKYMKSKNILLRHSKKCGW. The tract at residues 752 to 1008 is interaction with BRPF1; it reads EFCLKYMKSK…EEEREAEKEA (257 aa). The residue at position 815 (Lys-815) is an N6-acetyllysine; by autocatalysis. Acetyl-CoA-binding positions include 856–860 and 865–871; these read SCIMI and QRQGFGR. The active-site Proton donor/acceptor is Glu-891. Ser-895 is a binding site for acetyl-CoA. 3 disordered regions span residues 1022–1452, 1484–1538, and 1580–1619; these read EQEI…FKEV, SCNS…MEID, and QSPQIATTLDDCQQSDHSSPVSSVHSHPGQSVRSVNSPSV. Residues 1025–1043 are compositionally biased toward polar residues; sequence ILSTRANSRQSPAKVQSKN. 3 positions are modified to N6-acetyllysine: Lys-1038, Lys-1042, and Lys-1044. Residue Ser-1048 is modified to Phosphoserine. A compositionally biased stretch (acidic residues) spans 1069–1105; the sequence is SEEEEEEEDEEEEEEEEEEEEDEEEEEEEEEEEEEEN. Residues 1106–1117 show a composition bias toward polar residues; that stretch reads IQSSPPRLTKPQ. Positions 1121 to 1140 are enriched in basic residues; it reads IKRKRPFVLKKKRGRKRRRI. The segment covering 1142 to 1155 has biased composition (low complexity); it reads SSVTTETISETTEV. The segment covering 1187–1200 has biased composition (basic residues); that stretch reads PVLRKAFQHQPGKK. Basic and acidic residues-rich tracts occupy residues 1229–1243, 1306–1315, and 1341–1350; these read SNLKEGSKDNPEPLK, RIEEEVKETG, and EKPEDDLIKP. A compositionally biased stretch (acidic residues) spans 1351-1374; sequence EEEEEEEEEEEEEEEEEEGEEEEG. 2 stretches are compositionally biased toward basic and acidic residues: residues 1378–1390 and 1396–1407; these read VEKDPDGAKSQEK and STEKEDSARLDD. The segment covering 1408 to 1417 has biased composition (acidic residues); the sequence is HEEEEEEDEE. The span at 1433-1452 shows a compositional bias: basic and acidic residues; sequence HMESAEVEKEELPRESFKEV. Residues 1498–1507 are compositionally biased toward acidic residues; sequence AVPESDEEPP. Basic and acidic residues predominate over residues 1513–1529; it reads QKQDQKNSKEVDTEFKE. The interval 1560 to 2073 is interaction with RUNX1 and RUNX2; the sequence is QDCAETQEAC…QSLNGSYMRR (514 aa). Over residues 1580-1591 the composition is skewed to polar residues; the sequence is QSPQIATTLDDC. Positions 1594 to 1611 are enriched in low complexity; the sequence is SDHSSPVSSVHSHPGQSV.

This sequence belongs to the MYST (SAS/MOZ) family. Component of the MOZ/MORF complex composed at least of ING5, KAT6A, KAT6B, MEAF6 and one of BRPF1, BRD1/BRPF2 and BRPF3. Interacts with RUNX1 and RUNX2. In terms of processing, autoacetylated. Autoacetylation at Lys-815 is required for proper function. As to expression, ubiquitously expressed, with high levels in heart, pancreas, testis and ovary.

Its subcellular location is the nucleus. The enzyme catalyses L-lysyl-[protein] + acetyl-CoA = N(6)-acetyl-L-lysyl-[protein] + CoA + H(+). In terms of biological role, histone acetyltransferase which may be involved in both positive and negative regulation of transcription. Required for RUNX2-dependent transcriptional activation. May be involved in cerebral cortex development. Component of the MOZ/MORF complex which has a histone H3 acetyltransferase activity. The chain is Histone acetyltransferase KAT6B (KAT6B) from Homo sapiens (Human).